The chain runs to 124 residues: Ribonuclease P protein subunit p14 (124 aa).

It belongs to the eukaryotic/archaeal RNase P protein component 2 family. In terms of assembly, RNase P consists of a catalytic RNA moiety and about 10 protein subunits; POP1, POP4, POP5, POP7, RPP14, RPP21, RPP25, RPP30, RPP38 and RPP40. Within the RNase P complex, POP1, POP7 and RPP25 form the 'finger' subcomplex, POP5, RPP14, RPP40 and homodimeric RPP30 form the 'palm' subcomplex, and RPP21, POP4 and RPP38 form the 'wrist' subcomplex. All subunits of the RNase P complex interact with the catalytic RNA.

The protein localises to the nucleus. The protein resides in the nucleolus. Functionally, component of ribonuclease P, a ribonucleoprotein complex that generates mature tRNA molecules by cleaving their 5'-ends. This chain is Ribonuclease P protein subunit p14 (RPP14), found in Homo sapiens (Human).